An 873-amino-acid polypeptide reads, in one-letter code: Zinc fingers and homeoboxes protein 1 (873 aa).

The disordered stretch occupies residues 24-63; sequence LISDLDEGPPVLTPVENTRAESISSDEEVHESVDSDNQQN. T36 is modified (phosphothreonine). A phosphoserine mark is found at S45, S47, and S48. 2 consecutive C2H2-type zinc fingers follow at residues 70–93 and 102–125; these read YECK…DSEH and YVCV…LKYH. K159 participates in a covalent cross-link: Glycyl lysine isopeptide (Lys-Gly) (interchain with G-Cter in SUMO2). The disordered stretch occupies residues 198–236; the sequence is VHHNSVEDVPEEKENEIKPDREETVENPSSSASESNTST. Position 202 is a phosphoserine (S202). The span at 212-221 shows a compositional bias: basic and acidic residues; it reads NEIKPDREET. Residues 223–236 show a composition bias toward low complexity; it reads ENPSSSASESNTST. The required for dimerization stretch occupies residues 272 to 432; that stretch reads NSNLIPKVLI…QNNVQKSQVP (161 aa). Residues 272 to 564 are required for interaction with NFYA; it reads NSNLIPKVLI…VQPKQSWNPF (293 aa). The segment at residues 284 to 346 is a DNA-binding region (homeobox 1); sequence NSIPTYNAAL…LKHGVSWTPE (63 aa). Residues 431–454 are disordered; sequence VPAAQPTAETKPATAAVPTSQSVK. Residues K441, K454, and K485 each participate in a glycyl lysine isopeptide (Lys-Gly) (interchain with G-Cter in SUMO2) cross-link. A DNA-binding region (homeobox 2) is located at residues 464 to 526; sequence SFGIRAKKTK…YNQRNSKSNQ (63 aa). Disordered regions lie at residues 544–563, 626–668, and 732–769; these read DETT…SWNP, KEEK…CKKT, and SSMN…INNW. Positions 550 to 562 are enriched in polar residues; it reads PTVGTVQPKQSWN. A DNA-binding region (homeobox 3) is located at residues 569-630; sequence PQKFKEKTAE…KSKALKEEKM (62 aa). Residue K629 forms a Glycyl lysine isopeptide (Lys-Gly) (interchain with G-Cter in SUMO2) linkage. S648 is modified (phosphoserine). A DNA-binding region (homeobox 4) is located at residues 660-722; that stretch reads STGKICKKTP…YAWKNGNLKW (63 aa). The tract at residues 734–768 is required for nuclear localization; that stretch reads MNGLSSLRKRGRGRPKGRGRGRPRGRPRGSKRINN. Basic residues predominate over residues 740–764; the sequence is LRKRGRGRPKGRGRGRPRGRPRGSK. S774 is modified (phosphoserine). The homeobox 5 DNA-binding region spans 777 to 832; the sequence is KFKTGTAILKDYYLKHKFLNEQDLDELVNKSHMGYEQVREWFAERQRRSELGIELF. A disordered region spans residues 829-873; that stretch reads IELFEENEEEDEVIDDQEEDEEETDDSDTWEPPRHVKRKLSKSDD. The span at 831-857 shows a compositional bias: acidic residues; sequence LFEENEEEDEVIDDQEEDEEETDDSDT. The interval 831-873 is required for repressor activity; the sequence is LFEENEEEDEVIDDQEEDEEETDDSDTWEPPRHVKRKLSKSDD. The segment covering 863-873 has biased composition (basic residues); it reads HVKRKLSKSDD.

It belongs to the ZHX family. In terms of assembly, forms homodimers. Heterodimer (via HD1 domain) with ZHX2 (via HD1 domain). Also forms a heterodimer with ZHX3 which is a prerequisite for repressor activity. Interacts with ATF7IP and NFYA. Interacts (via homeobox domains) with DNMT3B (via PWWP domain).

The protein localises to the nucleus. Functionally, acts as a transcriptional repressor. Increases DNMT3B-mediated repressive transcriptional activity when DNMT3B is tethered to DNA. May link molecule between DNMT3B and other co-repressor proteins. This is Zinc fingers and homeoboxes protein 1 (ZHX1) from Pongo pygmaeus (Bornean orangutan).